The chain runs to 231 residues: Regulatory protein VanR (231 aa).

Positions 4–117 (KILIVDDEHE…ELIARVKAQL (114 aa)) constitute a Response regulatory domain. 4-aspartylphosphate is present on Asp-53. The ompR/PhoB-type DNA-binding region spans 131–231 (ENVIVHSGLV…VWGVGYKIEK (101 aa)).

Monomer. Post-translationally, phosphorylated by VanS. Dephosphorylated by VanS. Can be phosphorylated nonenzymatically by acetyl-phosphate.

The protein resides in the cytoplasm. Its function is as follows. Member of the two-component regulatory system VanS/VanR. Binds to the promoter regions of target genes, including vanH and vanR; phosphorylation of VanR increases binding affinity to the vanH and vanR promoters significantly. DNA binding may be inhibited by the cognate sensor protein, VanS. Activates the transcription of vanH, vanA and vanX in response to vancomycin which results in vancomycin resistance. Involved in conferring vancomycin resistance. In Enterococcus faecium (Streptococcus faecium), this protein is Regulatory protein VanR (vanR).